An 802-amino-acid chain; its full sequence is Phenylalanine--tRNA ligase beta subunit (802 aa).

One can recognise a tRNA-binding domain in the interval 39-154 (AEGLSKLVVG…EDAVPGDSIF (116 aa)). In terms of domain architecture, B5 spans 407 to 482 (TEPVQVSTSL…RIYGYEKLPT (76 aa)). Mg(2+) is bound by residues Asp-460, Asp-466, Glu-469, and Glu-470. In terms of domain architecture, FDX-ACB spans 709–802 (TKFPAVSRDI…LTEKVEAEVR (94 aa)).

It belongs to the phenylalanyl-tRNA synthetase beta subunit family. Type 1 subfamily. Tetramer of two alpha and two beta subunits. Mg(2+) serves as cofactor.

Its subcellular location is the cytoplasm. The catalysed reaction is tRNA(Phe) + L-phenylalanine + ATP = L-phenylalanyl-tRNA(Phe) + AMP + diphosphate + H(+). This Streptococcus thermophilus (strain CNRZ 1066) protein is Phenylalanine--tRNA ligase beta subunit.